The following is a 772-amino-acid chain: Carnitine O-palmitoyltransferase 1, muscle isoform (772 aa).

Over 1–47 (MAEAHQAVAFQFTVTPEGVDFRLSREALKHIYLSGINSWKKRLIRIK) the chain is Cytoplasmic. Residues 48–73 (NGILRGVYPGSPTSWLVVASATAGSS) form a helical membrane-spanning segment. At 74–102 (YYNVDISMGLVNHIQRCLPERYGPYWTPQ) the chain is on the mitochondrial intermembrane side. A helical membrane pass occupies residues 103 to 122 (TRALLSMAVVSTGVWMIGIF). The Cytoplasmic segment spans residues 123–772 (FFRQTLKLLL…DLFQVPKTDS (650 aa)). H473 serves as the catalytic Proton acceptor. 555 to 567 (GKGLIKKCRTSPD) is a binding site for CoA. Residues Y589 and T602 each coordinate (R)-carnitine.

This sequence belongs to the carnitine/choline acetyltransferase family.

The protein resides in the mitochondrion outer membrane. It catalyses the reaction (R)-carnitine + hexadecanoyl-CoA = O-hexadecanoyl-(R)-carnitine + CoA. Its pathway is lipid metabolism; fatty acid beta-oxidation. Catalyzes the transfer of the acyl group of long-chain fatty acid-CoA conjugates onto carnitine, an essential step for the mitochondrial uptake of long-chain fatty acids and their subsequent beta-oxidation in the mitochondrion. The protein is Carnitine O-palmitoyltransferase 1, muscle isoform (CPT1B) of Sus scrofa (Pig).